The following is an 82-amino-acid chain: Translational regulator CsrA (82 aa).

It belongs to the CsrA/RsmA family. As to quaternary structure, homodimer; the beta-strands of each monomer intercalate to form a hydrophobic core while the alpha-helices form wings that extend away from the core. Each of the alpha-helical wings interacts with an FliW monomer, yielding a FliW-CsrA(2)-FliW complex.

The protein localises to the cytoplasm. Functionally, a translational regulator that binds mRNA to regulate translation initiation and/or mRNA stability. Usually binds in the 5'-UTR at or near the Shine-Dalgarno sequence preventing ribosome-binding, thus repressing translation. Its main target seems to be the major flagellin gene, while its function is anatagonized by FliW. This is Translational regulator CsrA from Geobacillus thermodenitrificans (strain NG80-2).